The sequence spans 346 residues: Phosphoribosylformylglycinamidine cyclo-ligase (346 aa).

It belongs to the AIR synthase family.

It localises to the cytoplasm. It carries out the reaction 2-formamido-N(1)-(5-O-phospho-beta-D-ribosyl)acetamidine + ATP = 5-amino-1-(5-phospho-beta-D-ribosyl)imidazole + ADP + phosphate + H(+). The protein operates within purine metabolism; IMP biosynthesis via de novo pathway; 5-amino-1-(5-phospho-D-ribosyl)imidazole from N(2)-formyl-N(1)-(5-phospho-D-ribosyl)glycinamide: step 2/2. The polypeptide is Phosphoribosylformylglycinamidine cyclo-ligase (Photobacterium profundum (strain SS9)).